The chain runs to 407 residues: NAD(P)H-quinone oxidoreductase subunit 1 (407 aa).

The next 9 helical transmembrane spans lie at 28–48 (WLPL…IAAV), 96–116 (WLFT…YLVI), 127–147 (ITIG…GALM), 175–195 (LALS…VDIV), 203–223 (LFSF…IFLI), 267–287 (LILA…FIVP), 309–329 (ALVG…LAIL), 347–367 (WKFL…LVLL), and 374–394 (TLPL…AMSL).

Belongs to the complex I subunit 1 family. As to quaternary structure, NDH-1 is composed of at least 11 different subunits.

It localises to the cell inner membrane. The enzyme catalyses a plastoquinone + NADH + (n+1) H(+)(in) = a plastoquinol + NAD(+) + n H(+)(out). It catalyses the reaction a plastoquinone + NADPH + (n+1) H(+)(in) = a plastoquinol + NADP(+) + n H(+)(out). In terms of biological role, NDH-1 shuttles electrons from an unknown electron donor, via FMN and iron-sulfur (Fe-S) centers, to quinones in the respiratory and/or the photosynthetic chain. The immediate electron acceptor for the enzyme in this species is believed to be plastoquinone. Couples the redox reaction to proton translocation, and thus conserves the redox energy in a proton gradient. The polypeptide is NAD(P)H-quinone oxidoreductase subunit 1 (Gloeobacter violaceus (strain ATCC 29082 / PCC 7421)).